We begin with the raw amino-acid sequence, 834 residues long: Leucine--tRNA ligase (834 aa).

Positions 36–46 match the 'HIGH' region motif; it reads PYPSGKIHVGH. A 'KMSKS' region motif is present at residues 602-606; the sequence is KMSKS. An ATP-binding site is contributed by Lys605.

It belongs to the class-I aminoacyl-tRNA synthetase family.

It localises to the cytoplasm. It carries out the reaction tRNA(Leu) + L-leucine + ATP = L-leucyl-tRNA(Leu) + AMP + diphosphate. The sequence is that of Leucine--tRNA ligase from Rickettsia canadensis (strain McKiel).